Consider the following 189-residue polypeptide: NADH-quinone oxidoreductase subunit B (189 aa).

Positions 39, 40, 104, and 135 each coordinate [4Fe-4S] cluster.

The protein belongs to the complex I 20 kDa subunit family. In terms of assembly, NDH-1 is composed of 14 different subunits. Subunits NuoB, C, D, E, F, and G constitute the peripheral sector of the complex. [4Fe-4S] cluster is required as a cofactor.

It localises to the cell inner membrane. It carries out the reaction a quinone + NADH + 5 H(+)(in) = a quinol + NAD(+) + 4 H(+)(out). In terms of biological role, NDH-1 shuttles electrons from NADH, via FMN and iron-sulfur (Fe-S) centers, to quinones in the respiratory chain. The immediate electron acceptor for the enzyme in this species is believed to be a menaquinone. Couples the redox reaction to proton translocation (for every two electrons transferred, four hydrogen ions are translocated across the cytoplasmic membrane), and thus conserves the redox energy in a proton gradient. In Chlorobium luteolum (strain DSM 273 / BCRC 81028 / 2530) (Pelodictyon luteolum), this protein is NADH-quinone oxidoreductase subunit B.